Reading from the N-terminus, the 442-residue chain is Coiled-coil domain-containing protein 112 (442 aa).

Coiled coils occupy residues 23–116 and 217–249; these read LEEL…RRIE and LEEK…VDTV. Disordered regions lie at residues 245-272, 289-312, and 392-442; these read KVDT…KKQK, KLAS…QRQS, and EKVE…RQGI. Composition is skewed to basic and acidic residues over residues 256–268 and 294–310; these read KAED…EEQR and LREE…ERQR. Residues 281-400 are a coiled coil; that stretch reads RKSLEMSAKL…KEKVENNVSR (120 aa).

The protein localises to the cytoplasm. The protein resides in the cytoskeleton. It is found in the microtubule organizing center. It localises to the centrosome. Its subcellular location is the centriolar satellite. This Mus musculus (Mouse) protein is Coiled-coil domain-containing protein 112 (Ccdc112).